Consider the following 235-residue polypeptide: 2,3-bisphosphoglycerate-dependent phosphoglycerate mutase (235 aa).

Residues 8–15 (RHGESIWN), 21–22 (TG), Arg-58, 110–113 (ERYY), Lys-121, 137–138 (RR), and 181–182 (GN) contribute to the substrate site. His-9 serves as the catalytic Tele-phosphohistidine intermediate. Catalysis depends on Glu-110, which acts as the Proton donor/acceptor.

It belongs to the phosphoglycerate mutase family. BPG-dependent PGAM subfamily.

The enzyme catalyses (2R)-2-phosphoglycerate = (2R)-3-phosphoglycerate. Its pathway is carbohydrate degradation; glycolysis; pyruvate from D-glyceraldehyde 3-phosphate: step 3/5. In terms of biological role, catalyzes the interconversion of 2-phosphoglycerate and 3-phosphoglycerate. The polypeptide is 2,3-bisphosphoglycerate-dependent phosphoglycerate mutase (Methanococcus vannielii (strain ATCC 35089 / DSM 1224 / JCM 13029 / OCM 148 / SB)).